A 428-amino-acid polypeptide reads, in one-letter code: Dihydroorotase (428 aa).

Zn(2+) contacts are provided by H56 and H58. Substrate contacts are provided by residues 58–60 and N90; that span reads HLR. Zn(2+) is bound by residues D150, H177, and H230. Residue N276 participates in substrate binding. D303 is a Zn(2+) binding site. The active site involves D303. H307 contacts substrate.

Belongs to the metallo-dependent hydrolases superfamily. DHOase family. Class I DHOase subfamily. The cofactor is Zn(2+).

The catalysed reaction is (S)-dihydroorotate + H2O = N-carbamoyl-L-aspartate + H(+). Its pathway is pyrimidine metabolism; UMP biosynthesis via de novo pathway; (S)-dihydroorotate from bicarbonate: step 3/3. Catalyzes the reversible cyclization of carbamoyl aspartate to dihydroorotate. The protein is Dihydroorotase of Streptomyces coelicolor (strain ATCC BAA-471 / A3(2) / M145).